The chain runs to 237 residues: Large ribosomal subunit protein uL1 (237 aa).

The protein belongs to the universal ribosomal protein uL1 family. As to quaternary structure, part of the 50S ribosomal subunit.

Functionally, binds directly to 23S rRNA. The L1 stalk is quite mobile in the ribosome, and is involved in E site tRNA release. In terms of biological role, protein L1 is also a translational repressor protein, it controls the translation of the L11 operon by binding to its mRNA. This is Large ribosomal subunit protein uL1 from Solibacter usitatus (strain Ellin6076).